A 147-amino-acid chain; its full sequence is MTTTIYILNGPNLNLLGQRQPEIYGHETLADVERRCAEVAAEKGFSVRLFQSNHEGTIIDQIHEARQAACGIVINPAAYTHTSVAILDALHAFEGPVIECHISNVHKRESFRHHSYVSLRADGVLAGFGIEGYELAVRRICSLCAGG.

Tyr-24 (proton acceptor) is an active-site residue. Residues Asn-75, His-81, and Asp-88 each coordinate substrate. Catalysis depends on His-101, which acts as the Proton donor. Substrate contacts are provided by residues 102 to 103 (IS) and Arg-112.

It belongs to the type-II 3-dehydroquinase family. As to quaternary structure, homododecamer.

It catalyses the reaction 3-dehydroquinate = 3-dehydroshikimate + H2O. The protein operates within metabolic intermediate biosynthesis; chorismate biosynthesis; chorismate from D-erythrose 4-phosphate and phosphoenolpyruvate: step 3/7. Catalyzes a trans-dehydration via an enolate intermediate. The sequence is that of 3-dehydroquinate dehydratase from Cereibacter sphaeroides (strain ATCC 17029 / ATH 2.4.9) (Rhodobacter sphaeroides).